We begin with the raw amino-acid sequence, 417 residues long: MNIIDELTWRGAVNQQTDEEGLKKLTDEKKIGLYAGIDPTGDSMHIGHLIPFMVLKRFQQAGHKPVILIGGGTGSIGDPSGKKSERVLQTMEQVHHNEEALKSQMVKFFGTDNFRMVNNYDWLSKMSLLDFLRDYGKLFNVNTMLAKDIVASRLEVGISFTEFTYQILQSIDFLHLYKNEDVQLQIGGGDQWGNITAGTDLIHRMEGQEAKVYGLTIPLLLKADGTKFGKSEGGNVWLDAEKTTPYEFYQFWLNQDDRDVVKFLKYFTFLSHEEIERLAETVKTAPEKREAQRRLAEEVTSFVHGDAAVEEAQHISAALFSGEVKDLTASEIEQGFKNMPSVDVENKKENIVLWLVDTTKIESSRRQAREDIQNGAIRINGEKVTDVNAEIDPASNFDGKFVIVRRGKKKYFLARVK.

Tyr34 is a binding site for L-tyrosine. A 'HIGH' region motif is present at residues 39–48; sequence PTGDSMHIGH. L-tyrosine is bound by residues Tyr165 and Gln169. Positions 227–231 match the 'KMSKS' region motif; sequence KFGKS. Lys230 contacts ATP. In terms of domain architecture, S4 RNA-binding spans 349-417; sequence ENIVLWLVDT…KKKYFLARVK (69 aa).

It belongs to the class-I aminoacyl-tRNA synthetase family. TyrS type 1 subfamily. Homodimer.

The protein localises to the cytoplasm. The enzyme catalyses tRNA(Tyr) + L-tyrosine + ATP = L-tyrosyl-tRNA(Tyr) + AMP + diphosphate + H(+). Catalyzes the attachment of tyrosine to tRNA(Tyr) in a two-step reaction: tyrosine is first activated by ATP to form Tyr-AMP and then transferred to the acceptor end of tRNA(Tyr). The polypeptide is Tyrosine--tRNA ligase (Pediococcus pentosaceus (strain ATCC 25745 / CCUG 21536 / LMG 10740 / 183-1w)).